Reading from the N-terminus, the 73-residue chain is Translation initiation factor IF-1 (73 aa).

One can recognise an S1-like domain in the interval 1-72 (MAKEDHIEMA…SKGRIIFRDK (72 aa)).

This sequence belongs to the IF-1 family. Component of the 30S ribosomal translation pre-initiation complex which assembles on the 30S ribosome in the order IF-2 and IF-3, IF-1 and N-formylmethionyl-tRNA(fMet); mRNA recruitment can occur at any time during PIC assembly.

It localises to the cytoplasm. In terms of biological role, one of the essential components for the initiation of protein synthesis. Stabilizes the binding of IF-2 and IF-3 on the 30S subunit to which N-formylmethionyl-tRNA(fMet) subsequently binds. Helps modulate mRNA selection, yielding the 30S pre-initiation complex (PIC). Upon addition of the 50S ribosomal subunit IF-1, IF-2 and IF-3 are released leaving the mature 70S translation initiation complex. The sequence is that of Translation initiation factor IF-1 from Legionella pneumophila (strain Paris).